The following is a 161-amino-acid chain: Ribosomal RNA large subunit methyltransferase H (161 aa).

S-adenosyl-L-methionine is bound by residues Leu-78, Gly-110, and 129–134 (LGRMTF).

This sequence belongs to the RNA methyltransferase RlmH family. In terms of assembly, homodimer.

The protein localises to the cytoplasm. It carries out the reaction pseudouridine(1915) in 23S rRNA + S-adenosyl-L-methionine = N(3)-methylpseudouridine(1915) in 23S rRNA + S-adenosyl-L-homocysteine + H(+). Its function is as follows. Specifically methylates the pseudouridine at position 1915 (m3Psi1915) in 23S rRNA. The polypeptide is Ribosomal RNA large subunit methyltransferase H (Symbiobacterium thermophilum (strain DSM 24528 / JCM 14929 / IAM 14863 / T)).